The sequence spans 102 residues: ATP-dependent Clp protease adapter protein ClpS (102 aa).

This sequence belongs to the ClpS family. As to quaternary structure, binds to the N-terminal domain of the chaperone ClpA.

Its function is as follows. Involved in the modulation of the specificity of the ClpAP-mediated ATP-dependent protein degradation. This is ATP-dependent Clp protease adapter protein ClpS from Shewanella baltica (strain OS155 / ATCC BAA-1091).